The primary structure comprises 157 residues: SsrA-binding protein (157 aa).

The disordered stretch occupies residues 132–157; it reads EHDKRDTIKEREGKREVERAMKSRHR.

It belongs to the SmpB family.

Its subcellular location is the cytoplasm. Functionally, required for rescue of stalled ribosomes mediated by trans-translation. Binds to transfer-messenger RNA (tmRNA), required for stable association of tmRNA with ribosomes. tmRNA and SmpB together mimic tRNA shape, replacing the anticodon stem-loop with SmpB. tmRNA is encoded by the ssrA gene; the 2 termini fold to resemble tRNA(Ala) and it encodes a 'tag peptide', a short internal open reading frame. During trans-translation Ala-aminoacylated tmRNA acts like a tRNA, entering the A-site of stalled ribosomes, displacing the stalled mRNA. The ribosome then switches to translate the ORF on the tmRNA; the nascent peptide is terminated with the 'tag peptide' encoded by the tmRNA and targeted for degradation. The ribosome is freed to recommence translation, which seems to be the essential function of trans-translation. This chain is SsrA-binding protein, found in Paracidovorax citrulli (strain AAC00-1) (Acidovorax citrulli).